The following is a 200-amino-acid chain: Ras-related protein RHN1 (200 aa).

GTP-binding positions include 17-25 (GDMGAGKSS), 36-42 (LEFQEST), 65-69 (DTAGQ), 123-126 (NKAD), and 153-155 (SAK). Positions 39-47 (QESTIGAAF) match the Effector region motif. S-geranylgeranyl cysteine attachment occurs at residues C198 and C199.

This sequence belongs to the small GTPase superfamily. Rab family. As to expression, high in stem, root, and inflorescence.

It localises to the cell membrane. Functionally, protein transport. Probably involved in vesicular traffic. The polypeptide is Ras-related protein RHN1 (RHN1) (Nicotiana plumbaginifolia (Leadwort-leaved tobacco)).